Reading from the N-terminus, the 670-residue chain is MEMRGIENKSDIALAEFRLTGINGPDKDSSGSTYPDAAAVEAKYEAERQIQLRAHETVSDIEITVDDGWTDLAQDPWAGCPDPAGETPHLLTQRSHLLSQHRHRVLIVGAGFGGLLFAVRLLQTGQFKASDIVIADTAAGFGGTWYWNRYPGLMCDTESYIYMPLLEETGYMPRDKYASGSEIRQHAERIARYWGLETRAMFRTSVRDLAWDEDKKIWNVAGRLLGDVMDTEQFRMAADIVLLASGSFASPRVPNYPDIAKYKGKLFHTARWDYQFTGGSLENPKLTGLADKRVGIIGTGASAVQIIPHLARYSRSLIVFQRTPAAVDARDNRPTDPVWWKEEMASQGAGWQQRRQKNFNAFTCNETPLPGNNCVGDGWTRMPSFSLLIGGPQNLAPDYIDQMRAVDLVRQAQIRERAHALVQDPVAADLLTPWYPGWCKRPCFHDDYLSALNEENVRLVDLRHGGLSHFTPSGVVANGEEYELDLIVLSTGYTVPVTRASPGSRGNISITGRNGMTMEAKWANGLATLHGVMTRDLPNLFFAGTSQAGACVNLTYSVDQNATHVAYILGKAFERRPPNCDKVVLQPTHEGEEQWAGEVLARAAAFRGIAGCTPGYLNGYGKSLDSLSPEQQVNMARLAAWGEGIASYVNRLEEWREKGELEGVEMTFLN.

FAD is bound by residues 144-147 (TWYW), 156-157 (DT), and Tyr162. 154-156 (MCD) lines the NADP(+) pocket. Residues 299–305 (TGASAVQ) and 322–323 (RT) each bind NADP(+).

Belongs to the FAD-binding monooxygenase family. It depends on FAD as a cofactor.

The enzyme catalyses preaustinoid A + AH2 + O2 = preaustinoid A1 + A + H2O. Its pathway is secondary metabolite biosynthesis; terpenoid biosynthesis. In terms of biological role, FAD-binding monooxygenase; part of the gene cluster that mediates the biosynthesis of calidodehydroaustin, a fungal meroterpenoid. The first step of the pathway is the synthesis of 3,5-dimethylorsellinic acid by the polyketide synthase ausA. 3,5-dimethylorsellinic acid is then prenylated by the polyprenyl transferase ausN. Further epoxidation by the FAD-dependent monooxygenase ausM and cyclization by the probable terpene cyclase ausL lead to the formation of protoaustinoid A. Protoaustinoid A is then oxidized to spiro-lactone preaustinoid A3 by the combined action of the FAD-binding monooxygenases ausB and ausC, and the dioxygenase ausE. Acid-catalyzed keto-rearrangement and ring contraction of the tetraketide portion of preaustinoid A3 by ausJ lead to the formation of preaustinoid A4. The aldo-keto reductase ausK, with the help of ausH, is involved in the next step by transforming preaustinoid A4 into isoaustinone which is in turn hydroxylated by the P450 monooxygenase ausI to form austinolide. The cytochrome P450 monooxygenase ausG modifies austinolide to austinol. Austinol is further acetylated to austin by the O-acetyltransferase ausP, which spontaneously changes to dehydroaustin. The cytochrome P450 monooxygenase ausR then converts dehydroaustin is into 7-dehydrodehydroaustin. The hydroxylation catalyzed by ausR permits the O-acetyltransferase ausQ to add an additional acetyl group to the molecule, leading to the formation of acetoxydehydroaustin. The short chain dehydrogenase ausT catalyzes the reduction of the double bond present between carbon atoms 1 and 2 to convert 7-dehydrodehydroaustin into 1,2-dihydro-7-hydroxydehydroaustin. AusQ catalyzes not only an acetylation reaction but also the addition of the PKS ausV diketide product to 1,2-dihydro-7-hydroxydehydroaustin, forming precalidodehydroaustin. Finally, the iron/alpha-ketoglutarate-dependent dioxygenase converts precalidodehydroaustin into calidodehydroaustin. In Aspergillus calidoustus, this protein is FAD-binding monooxygenase ausC.